We begin with the raw amino-acid sequence, 405 residues long: Arrestin red cell isoform 2 (405 aa).

This sequence belongs to the arrestin family.

Its subcellular location is the cytoplasm. In Oncorhynchus mykiss (Rainbow trout), this protein is Arrestin red cell isoform 2.